The primary structure comprises 156 residues: Nuclear cap-binding protein subunit 2 (156 aa).

The residue at position 2 (S2) is an N-acetylserine. Residues S13 and S18 each carry the phosphoserine modification. MRNA is bound by residues Y20, Y43, 112 to 116 (RTDWD), 123 to 127 (RQYGR), and 133 to 134 (QV). An RRM domain is found at 40–118 (CTLYVGNLSF…RIIRTDWDAG (79 aa)). Positions 124–156 (QYGRGRSGGQVRDEYRQDYDAGRGGYGKLAQNQ) are disordered. Residues 134–144 (VRDEYRQDYDA) show a composition bias toward basic and acidic residues. Position 146 is an omega-N-methylarginine (R146).

Belongs to the RRM NCBP2 family. As to quaternary structure, component of the nuclear cap-binding complex (CBC), a heterodimer composed of NCBP1/CBP80 and NCBP2/CBP20 that interacts with m7GpppG-capped RNA. Found in a U snRNA export complex with PHAX/RNUXA, NCBP1/CBP80, NCBP2/CBP20, RAN, XPO1 and m7G-capped RNA. Interacts with PHAX/RNUXA, EIF4G1, HNRNPF, HNRNPH1 and ALYREF/THOC4/ALY. Interacts with SRRT/ARS2 and KPNA3.

The protein localises to the nucleus. The protein resides in the cytoplasm. Component of the cap-binding complex (CBC), which binds co-transcriptionally to the 5' cap of pre-mRNAs and is involved in various processes such as pre-mRNA splicing, translation regulation, nonsense-mediated mRNA decay, RNA-mediated gene silencing (RNAi) by microRNAs (miRNAs) and mRNA export. The CBC complex is involved in mRNA export from the nucleus via its interaction with ALYREF/THOC4/ALY, leading to the recruitment of the mRNA export machinery to the 5' end of mRNA and to mRNA export in a 5' to 3' direction through the nuclear pore. The CBC complex is also involved in mediating U snRNA and intronless mRNAs export from the nucleus. The CBC complex is essential for a pioneer round of mRNA translation, before steady state translation when the CBC complex is replaced by cytoplasmic cap-binding protein eIF4E. The pioneer round of mRNA translation mediated by the CBC complex plays a central role in nonsense-mediated mRNA decay (NMD), NMD only taking place in mRNAs bound to the CBC complex, but not on eIF4E-bound mRNAs. The CBC complex enhances NMD in mRNAs containing at least one exon-junction complex (EJC) via its interaction with UPF1, promoting the interaction between UPF1 and UPF2. The CBC complex is also involved in 'failsafe' NMD, which is independent of the EJC complex, while it does not participate in Staufen-mediated mRNA decay (SMD). During cell proliferation, the CBC complex is also involved in microRNAs (miRNAs) biogenesis via its interaction with SRRT/ARS2, thereby being required for miRNA-mediated RNA interference. The CBC complex also acts as a negative regulator of PARN, thereby acting as an inhibitor of mRNA deadenylation. In the CBC complex, NCBP2/CBP20 recognizes and binds capped RNAs (m7GpppG-capped RNA) but requires NCBP1/CBP80 to stabilize the movement of its N-terminal loop and lock the CBC into a high affinity cap-binding state with the cap structure. The conventional cap-binding complex with NCBP2 binds both small nuclear RNA (snRNA) and messenger (mRNA) and is involved in their export from the nucleus. This Bos taurus (Bovine) protein is Nuclear cap-binding protein subunit 2 (NCBP2).